Here is a 442-residue protein sequence, read N- to C-terminus: Protein translocase subunit SecY (442 aa).

Helical transmembrane passes span 29–49, 69–89, 126–146, 153–173, 182–202, 217–237, 274–294, 320–340, 377–397, and 400–420; these read LITI…VPDI, IFTG…LPYI, YIAF…LLRP, PLFI…VMWI, IGNG…PQTL, ITAV…IVFV, VMPI…AGFA, VYTV…ASLI, LTFL…FVEQ, and GVTT…GVAI.

The protein belongs to the SecY/SEC61-alpha family. In terms of assembly, component of the Sec protein translocase complex. Heterotrimer consisting of SecY, SecE and SecG subunits. The heterotrimers can form oligomers, although 1 heterotrimer is thought to be able to translocate proteins. Interacts with the ribosome. Interacts with SecDF, and other proteins may be involved. Interacts with SecA.

The protein localises to the cell inner membrane. It localises to the cellular thylakoid membrane. The central subunit of the protein translocation channel SecYEG. Consists of two halves formed by TMs 1-5 and 6-10. These two domains form a lateral gate at the front which open onto the bilayer between TMs 2 and 7, and are clamped together by SecE at the back. The channel is closed by both a pore ring composed of hydrophobic SecY resides and a short helix (helix 2A) on the extracellular side of the membrane which forms a plug. The plug probably moves laterally to allow the channel to open. The ring and the pore may move independently. This Synechocystis sp. (strain ATCC 27184 / PCC 6803 / Kazusa) protein is Protein translocase subunit SecY.